The following is a 446-amino-acid chain: Tubulin beta chain (446 aa).

GTP contacts are provided by glutamine 11, glutamate 69, serine 138, glycine 142, threonine 143, glycine 144, asparagine 204, and asparagine 226. Glutamate 69 contributes to the Mg(2+) binding site. Residues 425–446 (YQEASISEGEEEYPEEVSNEEE) are disordered. Acidic residues predominate over residues 432–446 (EGEEEYPEEVSNEEE).

Belongs to the tubulin family. As to quaternary structure, dimer of alpha and beta chains. A typical microtubule is a hollow water-filled tube with an outer diameter of 25 nm and an inner diameter of 15 nM. Alpha-beta heterodimers associate head-to-tail to form protofilaments running lengthwise along the microtubule wall with the beta-tubulin subunit facing the microtubule plus end conferring a structural polarity. Microtubules usually have 13 protofilaments but different protofilament numbers can be found in some organisms and specialized cells. Requires Mg(2+) as cofactor.

It localises to the cytoplasm. The protein resides in the cytoskeleton. Its function is as follows. Tubulin is the major constituent of microtubules, a cylinder consisting of laterally associated linear protofilaments composed of alpha- and beta-tubulin heterodimers. Microtubules grow by the addition of GTP-tubulin dimers to the microtubule end, where a stabilizing cap forms. Below the cap, tubulin dimers are in GDP-bound state, owing to GTPase activity of alpha-tubulin. In Blumeria hordei (Barley powdery mildew), this protein is Tubulin beta chain (TUB2).